A 116-amino-acid chain; its full sequence is MMDLDNIPDTQTEAEELEEVVMGLIINSGQARSLAYAALKQAKQGDFAAAKAMMDQSRMALNEAHLVQTKLIEGDAGEGKMKVSLVLVHAQDHLMTSMLARELITELIELHEKLKA.

The region spanning 15–113 (EELEEVVMGL…ITELIELHEK (99 aa)) is the PTS EIIA type-3 domain. The active-site Tele-phosphohistidine intermediate is His89. Phosphohistidine; by HPr is present on His89.

In terms of assembly, forms a complex with ChbB (EIIB). ChbA is a homotrimer. Requires Mg(2+) as cofactor.

The protein localises to the cytoplasm. In terms of biological role, the phosphoenolpyruvate-dependent sugar phosphotransferase system (sugar PTS), a major carbohydrate active transport system, catalyzes the phosphorylation of incoming sugar substrates concomitantly with their translocation across the cell membrane. The enzyme II ChbABC PTS system is involved in the transport of the chitin disaccharide N,N'-diacetylchitobiose (GlcNAc2). This chain is PTS system N,N'-diacetylchitobiose-specific EIIA component (chbA), found in Escherichia coli O157:H7.